The chain runs to 141 residues: MRIMGFDLGEATIGVAVSDALQLTAQGKTVIKRQSLEKDIEQVTKLIEDYQVSKLIVGLPKNMNGSLGQMADQIMDFIKSLEQEVDIPIETVDERLTSRMAEQTLLEADVSRKKRKQVIDKLAAVNILQTYLDRQVNKNNN.

This sequence belongs to the YqgF nuclease family.

It localises to the cytoplasm. In terms of biological role, could be a nuclease involved in processing of the 5'-end of pre-16S rRNA. The sequence is that of Putative pre-16S rRNA nuclease from Natranaerobius thermophilus (strain ATCC BAA-1301 / DSM 18059 / JW/NM-WN-LF).